Reading from the N-terminus, the 171-residue chain is Shikimate kinase (171 aa).

13–18 (GVGKST) contacts ATP. Residue Ser17 coordinates Mg(2+). Residues Asp35, Arg59, and Gly81 each coordinate substrate. ATP is bound at residue Arg118. Residue Arg136 participates in substrate binding. An ATP-binding site is contributed by Arg153.

The protein belongs to the shikimate kinase family. As to quaternary structure, monomer. The cofactor is Mg(2+).

It localises to the cytoplasm. The enzyme catalyses shikimate + ATP = 3-phosphoshikimate + ADP + H(+). Its pathway is metabolic intermediate biosynthesis; chorismate biosynthesis; chorismate from D-erythrose 4-phosphate and phosphoenolpyruvate: step 5/7. Its function is as follows. Catalyzes the specific phosphorylation of the 3-hydroxyl group of shikimic acid using ATP as a cosubstrate. The polypeptide is Shikimate kinase (Streptomyces coelicolor (strain ATCC BAA-471 / A3(2) / M145)).